The chain runs to 1050 residues: DNA ligase 4 (1050 aa).

A disordered region spans residues 1 to 22 (MNTNRRSRSPDEEALEEDQHQY). 10 residues coordinate ATP: E329, K331, L332, R336, E398, F438, E498, K503, K520, and K522. K331 serves as the catalytic N6-AMP-lysine intermediate. Position 398 (E398) interacts with Mg(2+). A Mg(2+)-binding site is contributed by E498. Residues 691-702 (QEQERKKMEMEN) are compositionally biased toward basic and acidic residues. A disordered region spans residues 691–711 (QEQERKKMEMENRKRKPATKR). 2 BRCT domains span residues 742–840 (ASKR…KENK) and 936–1049 (LRSF…EYVA).

Belongs to the ATP-dependent DNA ligase family. Mg(2+) serves as cofactor.

It is found in the nucleus. It carries out the reaction ATP + (deoxyribonucleotide)n-3'-hydroxyl + 5'-phospho-(deoxyribonucleotide)m = (deoxyribonucleotide)n+m + AMP + diphosphate.. In terms of biological role, DNA ligase involved in DNA non-homologous end joining (NHEJ); required for double-strand break (DSB) repair. This is DNA ligase 4 (mus-53) from Neurospora crassa (strain ATCC 24698 / 74-OR23-1A / CBS 708.71 / DSM 1257 / FGSC 987).